The chain runs to 241 residues: Thiamine import ATP-binding protein ThiQ (241 aa).

Residues Ile7–Ile235 form the ABC transporter domain. Gly37 to Ser44 contributes to the ATP binding site.

It belongs to the ABC transporter superfamily. Thiamine importer (TC 3.A.1.19.1) family. The complex is composed of two ATP-binding proteins (ThiQ), two transmembrane proteins (ThiP) and a solute-binding protein (ThiB).

It is found in the cell inner membrane. The enzyme catalyses thiamine(out) + ATP + H2O = thiamine(in) + ADP + phosphate + H(+). In terms of biological role, part of the ABC transporter complex ThiBPQ involved in thiamine import. Responsible for energy coupling to the transport system. The chain is Thiamine import ATP-binding protein ThiQ from Brucella melitensis biotype 1 (strain ATCC 23456 / CCUG 17765 / NCTC 10094 / 16M).